An 897-amino-acid chain; its full sequence is Zinc finger protein zas1 (897 aa).

C2H2-type zinc fingers lie at residues 26-50 (FYCT…ERTH) and 56-79 (FSCS…QQMH). The segment at 93-119 (ASCFLGFCVLAHDYVNLINARHFMIEH) adopts a C2H2-type 3; atypical zinc-finger fold.

Its subcellular location is the nucleus. The protein is Zinc finger protein zas1 (zas1) of Schizosaccharomyces pombe (strain 972 / ATCC 24843) (Fission yeast).